Reading from the N-terminus, the 275-residue chain is Ammonia transport outward protein 3 (275 aa).

Residues 1-84 are Extracellular-facing; sequence MTSSASSPQD…NCAKYTPHQF (84 aa). Residue Ser4 is modified to Phosphoserine. Residues 85-105 traverse the membrane as a helical segment; sequence ANPVPLGLASFSLSCLVLSLI. The Cytoplasmic portion of the chain corresponds to 106-120; that stretch reads NANVRGVTDGKWALS. Residues 121-141 traverse the membrane as a helical segment; sequence LFMFFGGAIELFAGLLCFVIG. Residues 142 to 181 are Extracellular-facing; that stretch reads DTYAMTVFSSFGGFWICYGYGLTDTDNLVSGYTDPTMLNN. Residues 182 to 202 traverse the membrane as a helical segment; that stretch reads VIGFFLAGWTVFTFLMLMCTL. Topologically, residues 203–207 are cytoplasmic; sequence KSTWG. Residues 208-228 form a helical membrane-spanning segment; the sequence is LFLLLTFLDLTFLLLCIGTFI. Residues 229–236 are Extracellular-facing; that stretch reads DNNNLKMA. A helical membrane pass occupies residues 237 to 257; it reads GGYFGILSSCCGWYSLYCSVV. The Cytoplasmic portion of the chain corresponds to 258–275; the sequence is SPSNSYLAFRAHTMPNAP.

It belongs to the acetate uptake transporter (AceTr) (TC 2.A.96) family.

Its subcellular location is the cell membrane. Functionally, transporter protein required for ammonia export. Induced in rho(0) cells, probably to eliminate the excess ammonia that arises because of a potential defect in ammonia assimilation in those cells. The sequence is that of Ammonia transport outward protein 3 (ATO3) from Saccharomyces cerevisiae (strain ATCC 204508 / S288c) (Baker's yeast).